A 100-amino-acid polypeptide reads, in one-letter code: Integration host factor subunit alpha (100 aa).

Residues aspartate 54 to proline 73 are disordered.

This sequence belongs to the bacterial histone-like protein family. Heterodimer of an alpha and a beta chain.

Its function is as follows. This protein is one of the two subunits of integration host factor, a specific DNA-binding protein that functions in genetic recombination as well as in transcriptional and translational control. This is Integration host factor subunit alpha from Pseudomonas savastanoi pv. phaseolicola (strain 1448A / Race 6) (Pseudomonas syringae pv. phaseolicola (strain 1448A / Race 6)).